A 240-amino-acid chain; its full sequence is Pro-opiomelanocortin B (240 aa).

Residues 1–36 form the signal peptide; that stretch reads MFGTFLQNQSVRLNMVCAPWLLAVVVVCVCNPGVEG. At Gln37 the chain carries Pyrrolidone carboxylic acid. Residue His111 is a propeptide. Residue Ser112 is modified to N-acetylserine; in Corticotropin. The residue at position 124 (Ile124) is an Isoleucine amide.

It belongs to the POMC family. Specific enzymatic cleavages at paired basic residues yield the different active peptides. Post-translationally, acetylation of beta-endorphin occurs in a tissue-specific manner. As to expression, pituitary and hypothalamus of adult diploid animals.

The protein localises to the secreted. In terms of biological role, stimulates the adrenal glands to release cortisol. Melanocyte-stimulating hormone alpha: Anorexigenic peptide. Increases the pigmentation of skin by increasing melanin production in melanocytes. Functionally, melanocyte-stimulating hormone beta: Increases the pigmentation of skin by increasing melanin production in melanocytes. Its function is as follows. Beta-endorphin: Endogenous orexigenic opiate. In terms of biological role, endogenous opiate. The polypeptide is Pro-opiomelanocortin B (pomcb) (Oncorhynchus mykiss (Rainbow trout)).